The chain runs to 254 residues: Large ribosomal subunit protein uL4 (254 aa).

It belongs to the universal ribosomal protein uL4 family. In terms of assembly, part of the 50S ribosomal subunit.

Its function is as follows. One of the primary rRNA binding proteins, this protein initially binds near the 5'-end of the 23S rRNA. It is important during the early stages of 50S assembly. It makes multiple contacts with different domains of the 23S rRNA in the assembled 50S subunit and ribosome. Functionally, forms part of the polypeptide exit tunnel. This is Large ribosomal subunit protein uL4 from Methanothermobacter thermautotrophicus (strain ATCC 29096 / DSM 1053 / JCM 10044 / NBRC 100330 / Delta H) (Methanobacterium thermoautotrophicum).